We begin with the raw amino-acid sequence, 350 residues long: Protein RecA (350 aa).

Residue 65 to 72 participates in ATP binding; sequence GPESSGKT. Residues 326–350 form a disordered region; that stretch reads HNLKTRNTADSKVTGAKDEKSKEEK. The span at 340 to 350 shows a compositional bias: basic and acidic residues; the sequence is GAKDEKSKEEK.

The protein belongs to the RecA family.

Its subcellular location is the cytoplasm. Its function is as follows. Can catalyze the hydrolysis of ATP in the presence of single-stranded DNA, the ATP-dependent uptake of single-stranded DNA by duplex DNA, and the ATP-dependent hybridization of homologous single-stranded DNAs. It interacts with LexA causing its activation and leading to its autocatalytic cleavage. The sequence is that of Protein RecA from Clostridium novyi (strain NT).